The sequence spans 426 residues: Glutamate-1-semialdehyde 2,1-aminomutase (426 aa).

K265 is subject to N6-(pyridoxal phosphate)lysine.

The protein belongs to the class-III pyridoxal-phosphate-dependent aminotransferase family. HemL subfamily. In terms of assembly, homodimer. Pyridoxal 5'-phosphate is required as a cofactor.

It localises to the cytoplasm. It carries out the reaction (S)-4-amino-5-oxopentanoate = 5-aminolevulinate. The protein operates within porphyrin-containing compound metabolism; protoporphyrin-IX biosynthesis; 5-aminolevulinate from L-glutamyl-tRNA(Glu): step 2/2. In Escherichia coli O127:H6 (strain E2348/69 / EPEC), this protein is Glutamate-1-semialdehyde 2,1-aminomutase.